A 129-amino-acid polypeptide reads, in one-letter code: Protein Turandot A2 (129 aa).

The first 21 residues, 1–21 (MNSSTSLMCFALLLISPLCMG), serve as a signal peptide directing secretion. N-linked (GlcNAc...) asparagine glycosylation is present at asparagine 49.

It belongs to the Turandot family.

The protein resides in the secreted. Functionally, a humoral factor that plays a role in stress tolerance; gives increased resistance to the lethal effects of bacterial challenge and stress. Regulated by the JAK/STAT pathway and NF-KB-like Relish pathway in the fat body, upd3 in the hemocytes and Mekk1 in response to septic injury and consequent immune response. The sequence is that of Protein Turandot A2 (TotA2) from Drosophila simulans (Fruit fly).